A 373-amino-acid chain; its full sequence is UDP-N-acetylenolpyruvoylglucosamine reductase (373 aa).

The FAD-binding PCMH-type domain occupies 30 to 203 (LACTANSVVT…SRVGFRLHTD (174 aa)). R180 is an active-site residue. S258 serves as the catalytic Proton donor. Residue E356 is part of the active site.

Belongs to the MurB family. FAD serves as cofactor.

Its subcellular location is the cytoplasm. It catalyses the reaction UDP-N-acetyl-alpha-D-muramate + NADP(+) = UDP-N-acetyl-3-O-(1-carboxyvinyl)-alpha-D-glucosamine + NADPH + H(+). The protein operates within cell wall biogenesis; peptidoglycan biosynthesis. Functionally, cell wall formation. The sequence is that of UDP-N-acetylenolpyruvoylglucosamine reductase from Psychrobacter arcticus (strain DSM 17307 / VKM B-2377 / 273-4).